The following is a 207-amino-acid chain: 8-oxoguanine DNA glycosylase/AP lyase (207 aa).

Catalysis depends on residues Lys-129 and Asp-147.

It belongs to the type-2 OGG1 family.

It carries out the reaction 2'-deoxyribonucleotide-(2'-deoxyribose 5'-phosphate)-2'-deoxyribonucleotide-DNA = a 3'-end 2'-deoxyribonucleotide-(2,3-dehydro-2,3-deoxyribose 5'-phosphate)-DNA + a 5'-end 5'-phospho-2'-deoxyribonucleoside-DNA + H(+). Functionally, catalyzes the excision of an oxidatively damaged form of guanine (7,8-dihydro-8-oxoguanine = 8-oxoG) from DNA. Also cleaves the DNA backbone at apurinic/apyrimidinic sites (AP sites). Has little specificity for the base opposite oxoG. This is 8-oxoguanine DNA glycosylase/AP lyase from Methanocaldococcus jannaschii (strain ATCC 43067 / DSM 2661 / JAL-1 / JCM 10045 / NBRC 100440) (Methanococcus jannaschii).